The primary structure comprises 729 residues: Monosaccharide-sensing protein 3 (729 aa).

6 consecutive transmembrane segments (helical) span residues V5–I25, G46–V66, V81–F101, L104–T124, T135–M155, and L165–L185. Positions Q337–Y372 are disordered. The span at N356–T367 shows a compositional bias: polar residues. S446 is modified (phosphoserine). The next 6 membrane-spanning stretches (helical) occupy residues A511 to M531, A557 to M577, M581 to V601, L610 to I630, I650 to L670, and I673 to V693.

The protein belongs to the major facilitator superfamily. Sugar transporter (TC 2.A.1.1) family. Weakly expressed.

Its subcellular location is the vacuole membrane. It catalyses the reaction D-glucose(out) + H(+)(in) = D-glucose(in) + H(+)(out). The catalysed reaction is sucrose(out) + H(+)(in) = sucrose(in) + H(+)(out). Sugar proton-coupled antiporter which contributes to vacuolar sugar import (e.g. monosaccharides including glucose,sucrose and fructose), particularly during stress responses (e.g. in response to cold). The sequence is that of Monosaccharide-sensing protein 3 from Arabidopsis thaliana (Mouse-ear cress).